The chain runs to 347 residues: NADH-ubiquinone oxidoreductase chain 2 (347 aa).

10 helical membrane passes run 13-33 (IILG…WIGF), 59-79 (YFLT…TNLL), 96-116 (AVMT…FWVP), 122-142 (IPLS…LSVL), 149-169 (VSPT…GWGG), 178-198 (ILAY…AYNP), 201-221 (TLLN…LFMF), 247-267 (IMLS…WMII), 274-294 (ESLL…YFYM), and 323-343 (VPLL…APAL).

The protein belongs to the complex I subunit 2 family. In terms of assembly, core subunit of respiratory chain NADH dehydrogenase (Complex I) which is composed of 45 different subunits. Interacts with TMEM242.

The protein localises to the mitochondrion inner membrane. It carries out the reaction a ubiquinone + NADH + 5 H(+)(in) = a ubiquinol + NAD(+) + 4 H(+)(out). In terms of biological role, core subunit of the mitochondrial membrane respiratory chain NADH dehydrogenase (Complex I) which catalyzes electron transfer from NADH through the respiratory chain, using ubiquinone as an electron acceptor. Essential for the catalytic activity and assembly of complex I. This is NADH-ubiquinone oxidoreductase chain 2 from Megaderma spasma (Lesser false vampire bat).